Reading from the N-terminus, the 350-residue chain is Phosphoribosylformylglycinamidine cyclo-ligase (350 aa).

It belongs to the AIR synthase family.

It is found in the cytoplasm. The enzyme catalyses 2-formamido-N(1)-(5-O-phospho-beta-D-ribosyl)acetamidine + ATP = 5-amino-1-(5-phospho-beta-D-ribosyl)imidazole + ADP + phosphate + H(+). Its pathway is purine metabolism; IMP biosynthesis via de novo pathway; 5-amino-1-(5-phospho-D-ribosyl)imidazole from N(2)-formyl-N(1)-(5-phospho-D-ribosyl)glycinamide: step 2/2. This Cupriavidus taiwanensis (strain DSM 17343 / BCRC 17206 / CCUG 44338 / CIP 107171 / LMG 19424 / R1) (Ralstonia taiwanensis (strain LMG 19424)) protein is Phosphoribosylformylglycinamidine cyclo-ligase.